The sequence spans 242 residues: Small ribosomal subunit protein uS2 (242 aa).

The protein belongs to the universal ribosomal protein uS2 family.

This chain is Small ribosomal subunit protein uS2, found in Shewanella sediminis (strain HAW-EB3).